Reading from the N-terminus, the 243-residue chain is Lectin-4 (243 aa).

Position 1 is a pyrrolidone carboxylic acid (Gln1). A glycan (N-linked (GlcNAc...) asparagine; in alpha chain) is linked at Asn5. N-linked (GlcNAc...) asparagine glycosylation occurs at Asn18. 2 residues coordinate Mn(2+): Glu129 and Asp131. Residues Asp131, Trp133, Asn135, and Asp140 each contribute to the Ca(2+) site. Residues Asp140 and His145 each coordinate Mn(2+).

Belongs to the leguminous lectin family. Homodimer of Alpha and Beta forms. In terms of processing, N-glycosylation of Asn-5 converts form Beta to form Alpha.

Its function is as follows. Lectin which has a strong affinity for both the Lewis b and y human blood-group determinants. The chain is Lectin-4 from Griffonia simplicifolia (Bandeiraea simplicifolia).